Here is an 88-residue protein sequence, read N- to C-terminus: Apolipoprotein C-I (88 aa).

Positions 1 to 26 (MRLILSLPVLAVVLAMVLEGPAPAQA) are cleaved as a signal peptide.

The protein belongs to the apolipoprotein C1 family.

The protein resides in the secreted. Inhibitor of lipoprotein binding to the low density lipoprotein (LDL) receptor, LDL receptor-related protein, and very low density lipoprotein (VLDL) receptor. Associates with high density lipoproteins (HDL) and the triacylglycerol-rich lipoproteins in the plasma and makes up about 10% of the protein of the VLDL and 2% of that of HDL. Appears to interfere directly with fatty acid uptake and is also the major plasma inhibitor of cholesteryl ester transfer protein (CETP). Binds free fatty acids and reduces their intracellular esterification. Modulates the interaction of APOE with beta-migrating VLDL and inhibits binding of beta-VLDL to the LDL receptor-related protein. This chain is Apolipoprotein C-I (APOC1), found in Eidolon helvum (Straw-colored fruit bat).